A 252-amino-acid chain; its full sequence is Chitooligosaccharide deacetylase (252 aa).

Mg(2+) contacts are provided by His-61 and His-125.

Belongs to the YdjC deacetylase family. ChbG subfamily. In terms of assembly, homodimer. Mg(2+) is required as a cofactor.

The protein localises to the cytoplasm. It carries out the reaction N,N'-diacetylchitobiose + H2O = N-acetyl-beta-D-glucosaminyl-(1-&gt;4)-D-glucosamine + acetate. The enzyme catalyses diacetylchitobiose-6'-phosphate + H2O = N'-monoacetylchitobiose-6'-phosphate + acetate. It functions in the pathway glycan degradation; chitin degradation. Involved in the degradation of chitin. ChbG is essential for growth on the acetylated chitooligosaccharides chitobiose and chitotriose but is dispensable for growth on cellobiose and chitosan dimer, the deacetylated form of chitobiose. Deacetylation of chitobiose-6-P and chitotriose-6-P is necessary for both the activation of the chb promoter by the regulatory protein ChbR and the hydrolysis of phosphorylated beta-glucosides by the phospho-beta-glucosidase ChbF. Catalyzes the removal of only one acetyl group from chitobiose-6-P to yield monoacetylchitobiose-6-P, the inducer of ChbR and the substrate of ChbF. This is Chitooligosaccharide deacetylase from Enterobacter sp. (strain 638).